The sequence spans 298 residues: GTPase Era (298 aa).

Residues 3-170 enclose the Era-type G domain; it reads KSGFVAILGR…VQLLKDNLEE (168 aa). A G1 region spans residues 11–18; sequence GRPNVGKS. 11-18 contacts GTP; sequence GRPNVGKS. A G2 region spans residues 37 to 41; that stretch reads QSTRN. The tract at residues 58–61 is G3; sequence DTPG. GTP-binding positions include 58 to 62 and 120 to 123; these read DTPGI and NKID. Positions 120-123 are G4; that stretch reads NKID. The segment at 149-151 is G5; sequence ISA. The KH type-2 domain maps to 201–279; that stretch reads TQQEVPHSVA…YLETWVKVKK (79 aa).

The protein belongs to the TRAFAC class TrmE-Era-EngA-EngB-Septin-like GTPase superfamily. Era GTPase family. Monomer.

It is found in the cytoplasm. Its subcellular location is the cell membrane. An essential GTPase that binds both GDP and GTP, with rapid nucleotide exchange. Plays a role in 16S rRNA processing and 30S ribosomal subunit biogenesis and possibly also in cell cycle regulation and energy metabolism. This is GTPase Era from Streptococcus equi subsp. zooepidemicus (strain H70).